Here is a 248-residue protein sequence, read N- to C-terminus: 2,3-bisphosphoglycerate-dependent phosphoglycerate mutase (248 aa).

Residues 8–15 (RHGESTWN), 21–22 (TG), Arg-60, 87–90 (ERHY), Lys-98, 114–115 (RR), and 183–184 (GN) contribute to the substrate site. The Tele-phosphohistidine intermediate role is filled by His-9. The Proton donor/acceptor role is filled by Glu-87.

The protein belongs to the phosphoglycerate mutase family. BPG-dependent PGAM subfamily. As to quaternary structure, homodimer.

The enzyme catalyses (2R)-2-phosphoglycerate = (2R)-3-phosphoglycerate. It participates in carbohydrate degradation; glycolysis; pyruvate from D-glyceraldehyde 3-phosphate: step 3/5. Its function is as follows. Catalyzes the interconversion of 2-phosphoglycerate and 3-phosphoglycerate. The sequence is that of 2,3-bisphosphoglycerate-dependent phosphoglycerate mutase from Burkholderia vietnamiensis (strain G4 / LMG 22486) (Burkholderia cepacia (strain R1808)).